A 219-amino-acid polypeptide reads, in one-letter code: Deoxyribose-phosphate aldolase (219 aa).

The active-site Proton donor/acceptor is the Asp89. The active-site Schiff-base intermediate with acetaldehyde is Lys151. The Proton donor/acceptor role is filled by Lys180.

Belongs to the DeoC/FbaB aldolase family. DeoC type 1 subfamily.

It is found in the cytoplasm. The catalysed reaction is 2-deoxy-D-ribose 5-phosphate = D-glyceraldehyde 3-phosphate + acetaldehyde. It functions in the pathway carbohydrate degradation; 2-deoxy-D-ribose 1-phosphate degradation; D-glyceraldehyde 3-phosphate and acetaldehyde from 2-deoxy-alpha-D-ribose 1-phosphate: step 2/2. In terms of biological role, catalyzes a reversible aldol reaction between acetaldehyde and D-glyceraldehyde 3-phosphate to generate 2-deoxy-D-ribose 5-phosphate. In Clostridioides difficile (strain 630) (Peptoclostridium difficile), this protein is Deoxyribose-phosphate aldolase.